The sequence spans 236 residues: uncharacterized protein (236 aa).

Residues 52-72 form a helical membrane-spanning segment; sequence FFPYIALFQIIMLIILLILYF. The disordered stretch occupies residues 183–236; the sequence is SDKREHDDEELSFTTEMETITTETETSSTIPHLRSLPIKSESSMETTSEETDEE. Residues 196–212 show a composition bias toward low complexity; sequence TTEMETITTETETSSTI.

Its subcellular location is the membrane. This is an uncharacterized protein from Acheta domesticus (House cricket).